The primary structure comprises 234 residues: Endonuclease NucS (234 aa).

It belongs to the NucS endonuclease family.

Its subcellular location is the cytoplasm. In terms of biological role, cleaves both 3' and 5' ssDNA extremities of branched DNA structures. This Bifidobacterium animalis subsp. lactis (strain AD011) protein is Endonuclease NucS.